Reading from the N-terminus, the 1255-residue chain is Kinesin-related protein 7 (1255 aa).

The interval 1–26 (MESPVVEGNSGEVATPTLPQPPTPVS) is disordered. The Kinesin motor domain occupies 28–349 (NIRVVCRVRP…LQFGTRAKTI (322 aa)). ATP is bound at residue 107–114 (GQTASGKT). Low complexity-rich tracts occupy residues 454–491 (NNNNVDENNNTNNNDNNNNDNNNNNQYQEESNQYQQEN), 545–563 (NNNNVDDNNNGEINNDSDG), and 583–603 (HNINNNNNNNNNINNDNNSNS). Disordered regions lie at residues 454-503 (NNNN…NSSF), 530-564 (GNISDDDDDDDDHHSNNNNVDDNNNGEINNDSDGY), 579-628 (DLND…MDVN), 661-686 (ENEQQQQQQQHNDDDEDIKSTTSNAT), 795-864 (EEGS…TKSI), and 915-934 (ISIKSNKEPSPSSSTTTSIK). A compositionally biased stretch (polar residues) spans 608–628 (VSTSYITSSPNLSPSKSMDVN). Over residues 813 to 834 (GDDDDEENEDNENEDVIVDSDE) the composition is skewed to acidic residues. Low complexity predominate over residues 915 to 932 (ISIKSNKEPSPSSSTTTS). Residues 945–965 (IIFTIILTITLVSSSLLCLYL) form a helical membrane-spanning segment. Residues 1088–1223 (NYITKIDQLS…QELEDAPIAL (136 aa)) are a coiled coil.

The protein belongs to the TRAFAC class myosin-kinesin ATPase superfamily. Kinesin family.

The protein resides in the nucleus membrane. It localises to the cytoplasm. The protein localises to the cytoskeleton. In terms of biological role, microtubule-associated force-producing protein that plays a role in organelle transport. Its motor activity is directed toward the microtubule's plus end. May be involved in cell motility or cell differentiation during prestalk formation. The protein is Kinesin-related protein 7 (kif7) of Dictyostelium discoideum (Social amoeba).